The primary structure comprises 147 residues: Hemoglobin subunit epsilon (147 aa).

Positions His-3–His-147 constitute a Globin domain. Residues Ser-14 and Ser-51 each carry the phosphoserine modification. Residues His-64 and His-93 each coordinate heme b.

The protein belongs to the globin family. Heterotetramer of two alpha chains and two epsilon chains in early embryonic hemoglobin Gower-2; two zeta chains and two epsilon chains in early embryonic hemoglobin Gower-1. Red blood cells.

Its function is as follows. The epsilon chain is a beta-type chain of early mammalian embryonic hemoglobin. The sequence is that of Hemoglobin subunit epsilon (HBE1) from Cheirogaleus medius (Fat-tailed dwarf lemur).